Reading from the N-terminus, the 41-residue chain is MKIRNSLKSAKVRDKDCRVVRRHGKVYVINKKNPRMKARQG.

It belongs to the bacterial ribosomal protein bL36 family.

The polypeptide is Large ribosomal subunit protein bL36 (Gluconacetobacter diazotrophicus (strain ATCC 49037 / DSM 5601 / CCUG 37298 / CIP 103539 / LMG 7603 / PAl5)).